We begin with the raw amino-acid sequence, 47 residues long: Bifunctional chitinase/lysozyme (47 aa).

One can recognise a GH18 domain in the interval 1–47; it reads GGIAIYWGQNGNEGTLTQTCNTGKYSYVNIAFLNKFGNGQTPEINLA.

The protein belongs to the glycosyl hydrolase 18 family. Chitinase class II subfamily.

It localises to the secreted. It is found in the extracellular space. The enzyme catalyses Random endo-hydrolysis of N-acetyl-beta-D-glucosaminide (1-&gt;4)-beta-linkages in chitin and chitodextrins.. It catalyses the reaction Hydrolysis of (1-&gt;4)-beta-linkages between N-acetylmuramic acid and N-acetyl-D-glucosamine residues in a peptidoglycan and between N-acetyl-D-glucosamine residues in chitodextrins.. Functionally, bifunctional enzyme with lysozyme/chitinase activity. In Parthenocissus quinquefolia (Virginia creeper), this protein is Bifunctional chitinase/lysozyme.